The chain runs to 240 residues: Pyridoxine 5'-phosphate synthase (240 aa).

Asn7 serves as a coordination point for 3-amino-2-oxopropyl phosphate. 9 to 10 (DH) lines the 1-deoxy-D-xylulose 5-phosphate pocket. Arg18 contacts 3-amino-2-oxopropyl phosphate. The Proton acceptor role is filled by His43. Positions 45 and 50 each coordinate 1-deoxy-D-xylulose 5-phosphate. The active-site Proton acceptor is the Glu70. Thr100 is a 1-deoxy-D-xylulose 5-phosphate binding site. Catalysis depends on His191, which acts as the Proton donor. 3-amino-2-oxopropyl phosphate-binding positions include Gly192 and 213–214 (GH).

Belongs to the PNP synthase family. Homooctamer; tetramer of dimers.

It is found in the cytoplasm. It catalyses the reaction 3-amino-2-oxopropyl phosphate + 1-deoxy-D-xylulose 5-phosphate = pyridoxine 5'-phosphate + phosphate + 2 H2O + H(+). It participates in cofactor biosynthesis; pyridoxine 5'-phosphate biosynthesis; pyridoxine 5'-phosphate from D-erythrose 4-phosphate: step 5/5. Functionally, catalyzes the complicated ring closure reaction between the two acyclic compounds 1-deoxy-D-xylulose-5-phosphate (DXP) and 3-amino-2-oxopropyl phosphate (1-amino-acetone-3-phosphate or AAP) to form pyridoxine 5'-phosphate (PNP) and inorganic phosphate. In Gloeothece citriformis (strain PCC 7424) (Cyanothece sp. (strain PCC 7424)), this protein is Pyridoxine 5'-phosphate synthase.